We begin with the raw amino-acid sequence, 387 residues long: Patatin group D-2 (387 aa).

Residues 1-23 form the signal peptide; that stretch reads MATTKSFLILIVMILATTSSTFA. A PNPLA domain is found at 32 to 230; the sequence is LSIDGGGIKG…TVADPALLSI (199 aa). The GXGXXG signature appears at 36 to 41; it reads GGGIKG. Positions 75–79 match the GXSXG motif; that stretch reads GTSTG. The Nucleophile role is filled by S77. N-linked (GlcNAc...) asparagine glycosylation occurs at N115. Residue D216 is the Proton acceptor of the active site. A DGA/G motif is present at residues 216-218; that stretch reads DGA. The stretch at 361–385 forms a coiled coil; sequence ETYEEALKRFAKLLSDRKKLRANKA.

It belongs to the patatin family. As to expression, tuber.

The protein localises to the vacuole. Probable lipolytic acyl hydrolase (LAH), an activity which is thought to be involved in the response of tubers to pathogens. In Solanum tuberosum (Potato), this protein is Patatin group D-2.